The following is a 382-amino-acid chain: ATP phosphoribosyltransferase regulatory subunit (382 aa).

The protein belongs to the class-II aminoacyl-tRNA synthetase family. HisZ subfamily. Heteromultimer composed of HisG and HisZ subunits.

Its subcellular location is the cytoplasm. It participates in amino-acid biosynthesis; L-histidine biosynthesis; L-histidine from 5-phospho-alpha-D-ribose 1-diphosphate: step 1/9. Its function is as follows. Required for the first step of histidine biosynthesis. May allow the feedback regulation of ATP phosphoribosyltransferase activity by histidine. The chain is ATP phosphoribosyltransferase regulatory subunit from Verminephrobacter eiseniae (strain EF01-2).